The sequence spans 557 residues: MSTSVFNRRWAALLLEALARHGVRHVCIAPGSRSTPLTLAAAANKSFICHTHFDERGLGHLALGLAKASREPVAVIVTSGTAAANLYPSLIEAGLTGERLVFLTADRPPELINCGANQAIRQNGLYASHPALSIDLPRPTTDIPARWLVSTVDSAMARLQHGALHINCPFAEPLYGGDEQQYADWSATLGDWWQGNHPWLREVDPHQVLKQPDWFFWRQKRGVIVAGRMSADEGEHLAQWAEMLGWPLIGDVLSQTGQPLPCADLWLAQPQAQKRLAEAQLVVQFGSSLTGKRLLQWQEQCQPQEYWLIDDLPGRLDPAHHRGRRIRSSVAQWLELHPAQPRTPWADELTMLADNALDAVSGHLVNRFGEAQLAHRLPELLPENGQLFLGNSLIVRLIDALTRLPAGYPVFSNRGASGIDGLISTAAGVQRATAKPTLAVVGDLSALYDLNALALLRQCSAPTVLIVVNNNGGQIFSLLPTPEEDRQRFYCMPQNVEFSHAAAMFQLAYARPENWGQLLQAVEQGWRHGGATLIELQVPPSDGAQTLQHLVQQMTEQ.

This sequence belongs to the TPP enzyme family. MenD subfamily. As to quaternary structure, homodimer. Mg(2+) is required as a cofactor. Mn(2+) serves as cofactor. It depends on thiamine diphosphate as a cofactor.

The catalysed reaction is isochorismate + 2-oxoglutarate + H(+) = 5-enolpyruvoyl-6-hydroxy-2-succinyl-cyclohex-3-ene-1-carboxylate + CO2. Its pathway is quinol/quinone metabolism; 1,4-dihydroxy-2-naphthoate biosynthesis; 1,4-dihydroxy-2-naphthoate from chorismate: step 2/7. The protein operates within quinol/quinone metabolism; menaquinone biosynthesis. Its function is as follows. Catalyzes the thiamine diphosphate-dependent decarboxylation of 2-oxoglutarate and the subsequent addition of the resulting succinic semialdehyde-thiamine pyrophosphate anion to isochorismate to yield 2-succinyl-5-enolpyruvyl-6-hydroxy-3-cyclohexene-1-carboxylate (SEPHCHC). In Serratia proteamaculans (strain 568), this protein is 2-succinyl-5-enolpyruvyl-6-hydroxy-3-cyclohexene-1-carboxylate synthase.